We begin with the raw amino-acid sequence, 715 residues long: Palmitoyltransferase ZDHHC5 (715 aa).

The Cytoplasmic segment spans residues 1 to 13 (MPAESGKRFKPSK). A helical transmembrane segment spans residues 14 to 34 (YVPVSAAAIFLVGATTLFFAF). Residues 35–38 (TCPG) are Extracellular-facing. Residues 39 to 59 (LSLYVSPAVPIYNAIMFLFVL) form a helical membrane-spanning segment. At 60 to 148 (ANFSMATFMD…NCIGRRNYRY (89 aa)) the chain is on the cytoplasmic side. At Tyr-91 the chain carries Phosphotyrosine; by LYN. Residues 104–154 (KWCATCRFYRPPRCSHCSVCDNCVEEFDHHCPWVNNCIGRRNYRYFFLFLL) enclose the DHHC domain. Catalysis depends on Cys-134, which acts as the S-palmitoyl cysteine intermediate. Residues 149-169 (FFLFLLSLTAHIMGVFGFGLL) traverse the membrane as a helical segment. The Extracellular segment spans residues 170–191 (YVLYHIEELSGVRTAVTMAVMC). The helical transmembrane segment at 192 to 212 (VAGLFFIPVAGLTGFHVVLVA) threads the bilayer. The Cytoplasmic portion of the chain corresponds to 213–715 (RGRTTNEQVT…VGGTTYEISV (503 aa)). A Phosphoserine modification is found at Ser-247. The disordered stretch occupies residues 289-715 (GELRRTKSKG…VGGTTYEISV (427 aa)). Thr-294 is subject to Phosphothreonine. Phosphoserine is present on residues Ser-296 and Ser-299. Thr-303 carries the post-translational modification Phosphothreonine. The residue at position 345 (Ser-345) is a Phosphoserine. Thr-348 and Thr-350 each carry phosphothreonine. Residues 359-373 (SSSSTSAAMPHSSSA) show a composition bias toward low complexity. A phosphoserine mark is found at Ser-380, Ser-398, Ser-406, and Ser-409. Residue Thr-411 is modified to Phosphothreonine. 4 positions are modified to phosphoserine: Ser-415, Ser-425, Ser-429, and Ser-432. A compositionally biased stretch (low complexity) spans 422 to 432 (SSGSRSSSLKS). The residue at position 436 (Thr-436) is a Phosphothreonine. The span at 442-478 (QLQSIRSEGTTSTSYKSLANQTRNGSLSYDSLLTPSD) shows a compositional bias: polar residues. The residue at position 529 (Ser-529) is a Phosphoserine. Tyr-533 is subject to Phosphotyrosine; by FYN. Ser-554 carries the phosphoserine modification. Arg-617 is subject to Omega-N-methylarginine. At Ser-621 the chain carries Phosphoserine. Phosphothreonine is present on Thr-659. Polar residues predominate over residues 666–677 (LKTTYSKSNGQP). A phosphoserine mark is found at Ser-684 and Ser-694. The residue at position 697 (Arg-697) is an Omega-N-methylarginine.

The protein belongs to the DHHC palmitoyltransferase family. ERF2/ZDHHC9 subfamily. Post-translationally, phosphorylation regulates association with endocytic proteins and its subcellular localization. Phosphorylation by LYN during fatty acid uptake leads to inactivation of the activity. In terms of processing, autopalmitoylated. Palmitoylation of the C-terminal tail regulates stimulation-dependent plasma membrane motility.

It is found in the cell membrane. The protein resides in the synapse. It catalyses the reaction L-cysteinyl-[protein] + hexadecanoyl-CoA = S-hexadecanoyl-L-cysteinyl-[protein] + CoA. Its function is as follows. Palmitoyltransferase that catalyzes the addition of palmitate onto various protein substrates such as CTNND2, CD36, GSDMD, NLRP3, NOD1, NOD2, STAT3 and S1PR1 thus plays a role in various biological processes including cell adhesion, inflammation, fatty acid uptake, bacterial sensing or cardiac functions. Plays an important role in the regulation of synapse efficacy by mediating palmitoylation of delta-catenin/CTNND2, thereby increasing synaptic delivery and surface stabilization of alpha-amino-3-hydroxy-5-methyl-4-isoxazole propionic acid receptors (AMPARs). Under basal conditions, remains at the synaptic membrane through FYN-mediated phosphorylation that prevents association with endocytic proteins. Neuronal activity enhances the internalization and trafficking of DHHC5 from spines to dendritic shafts where it palmitoylates delta-catenin/CTNND2. Regulates cell adhesion at the plasma membrane by palmitoylating GOLGA7B and DSG2. Plays a role in innate immune response by mediating the palmitoylation of NOD1 and NOD2 and their proper recruitment to the bacterial entry site and phagosomes. Also participates in fatty acid uptake by palmitoylating CD36 and thereby targeting it to the plasma membrane. Upon binding of fatty acids to CD36, gets phosphorylated by LYN leading to inactivation and subsequent CD36 caveolar endocytosis. Controls oligodendrocyte development by catalyzing STAT3 palmitoylation. Acts as a regulator of inflammatory response by mediating palmitoylation of NLRP3 and GSDMD. Palmitoylates NLRP3 to promote inflammasome assembly and activation. Activates pyroptosis by catalyzing palmitoylation of gasdermin-D (GSDMD), thereby promoting membrane translocation and pore formation of GSDMD. The sequence is that of Palmitoyltransferase ZDHHC5 from Homo sapiens (Human).